Consider the following 324-residue polypeptide: Proto-oncogene Mas (324 aa).

Topologically, residues 1–35 (MDQSNMTSLAEEKAMNTSSRNASLGSSHPPIPIVH) are extracellular. Residues Asn5, Asn16, and Asn21 are each glycosylated (N-linked (GlcNAc...) asparagine). Residues 36 to 60 (WVIMSISPLGFVENGILLWFLCFRM) traverse the membrane as a helical segment. Over 61-64 (RRNP) the chain is Cytoplasmic. A helical transmembrane segment spans residues 65–86 (FTVYITHLSIADISLLFCIFIL). Residues 87-103 (SIDYALDYELSSGHHYT) lie on the Extracellular side of the membrane. Residues 104-127 (IVTLSVTFLFGYNTGLYLLTAISV) form a helical membrane-spanning segment. Topologically, residues 128-148 (ERCLSVLYPIWYRCHRPKHQS) are cytoplasmic. Residues 149 to 171 (AFVCALLWALSCLVTTMEYVMCI) traverse the membrane as a helical segment. Over 172–184 (DSGEESHSRSDCR) the chain is Extracellular. Residues 185-205 (AVIIFIAILSFLVFTPLMLVS) form a helical membrane-spanning segment. Over 206–223 (STILVVKIRKNTWASHSS) the chain is Cytoplasmic. A helical membrane pass occupies residues 224–244 (KLYIVIMVTIIIFLIFAMPMR). Over 245 to 262 (VLYLLYYEYWSAFGNLHN) the chain is Extracellular. The chain crosses the membrane as a helical span at residues 263 to 283 (ISLLFSTINSSANPFIYFFVG). At 284 to 324 (SSKKKRFRESLKVVLTRAFKDEMQPRRQEGNGNTVSIETVV) the chain is on the cytoplasmic side.

Belongs to the G-protein coupled receptor 1 family. In terms of assembly, interacts with AGTR1. Interacts with FLNA (via filamin repeat 21); increases PKA-mediated phosphorylation of FLNA.

The protein localises to the cell membrane. Its function is as follows. Acts specifically as a functional antagonist of AGTR1 (angiotensin-2 type 1 receptor), although it up-regulates AGTR1 receptor levels. Positive regulation of AGTR1 levels occurs through activation of the G-proteins GNA11 and GNAQ, and stimulation of the protein kinase C signaling cascade. The antagonist effect on AGTR1 function is probably due to AGTR1 being physically altered by MAS1. Receptor for angiotensin 1-7. This Mus musculus (Mouse) protein is Proto-oncogene Mas (Mas1).